The primary structure comprises 277 residues: Probable endonuclease 4 (277 aa).

Residues His67, His107, Glu142, Asp176, His179, His211, Asp224, His226, and Glu256 each coordinate Zn(2+).

Belongs to the AP endonuclease 2 family. Requires Zn(2+) as cofactor.

It catalyses the reaction Endonucleolytic cleavage to 5'-phosphooligonucleotide end-products.. In terms of biological role, endonuclease IV plays a role in DNA repair. It cleaves phosphodiester bonds at apurinic or apyrimidinic (AP) sites, generating a 3'-hydroxyl group and a 5'-terminal sugar phosphate. The polypeptide is Probable endonuclease 4 (Clostridium beijerinckii (strain ATCC 51743 / NCIMB 8052) (Clostridium acetobutylicum)).